A 227-amino-acid polypeptide reads, in one-letter code: PKHD-type hydroxylase Bamb_4192 (227 aa).

The Fe2OG dioxygenase domain maps to 78-178 (KVFPPLFNRY…RVASFFWIQS (101 aa)). Fe cation-binding residues include His-96, Asp-98, and His-159. 2-oxoglutarate is bound at residue Arg-169.

The cofactor is Fe(2+). It depends on L-ascorbate as a cofactor.

This chain is PKHD-type hydroxylase Bamb_4192, found in Burkholderia ambifaria (strain ATCC BAA-244 / DSM 16087 / CCUG 44356 / LMG 19182 / AMMD) (Burkholderia cepacia (strain AMMD)).